The chain runs to 256 residues: MPPAQGYEFAAAKGPRDELGPSFPMASPPGLELKTLSNGPQAPRRSAPLGPVAPTREGVENACFSSEEHETHFQNPGNTRLGSSPSPPGGVSSLPRSQRDDLSLHSEEGPALEPVSRPVDYGFVSALVFLVSGILLVVTAYAIPREARVNPDTVTAREMERLEMYYARLGSHLDRCIIAGLGLLTVGGMLLSVLLMVSLCKGELYRRRTFVPGKGSRKTYGSINLRMRQLNGDGGQALVENEVVQVSETSHTLQRS.

The segment at 1–111 is disordered; it reads MPPAQGYEFA…LSLHSEEGPA (111 aa). The segment covering 80–96 has biased composition (low complexity); it reads RLGSSPSPPGGVSSLPR. A compositionally biased stretch (basic and acidic residues) spans 97–108; sequence SQRDDLSLHSEE. The next 2 helical transmembrane spans lie at 123–143 and 177–197; these read FVSA…AYAI and IIAG…LLMV.

Belongs to the TMEM74 family.

The protein resides in the membrane. The protein is Transmembrane protein 74B (TMEM74B) of Homo sapiens (Human).